Here is a 160-residue protein sequence, read N- to C-terminus: Ureidoglycolate lyase (160 aa).

This sequence belongs to the ureidoglycolate lyase family. Homodimer. Ni(2+) serves as cofactor.

It catalyses the reaction (S)-ureidoglycolate = urea + glyoxylate. It functions in the pathway nitrogen metabolism; (S)-allantoin degradation. In terms of biological role, catalyzes the catabolism of the allantoin degradation intermediate (S)-ureidoglycolate, generating urea and glyoxylate. Involved in the anaerobic utilization of allantoin as sole nitrogen source. Reinforces the induction of genes involved in the degradation of allantoin and glyoxylate by producing glyoxylate. In Escherichia coli O139:H28 (strain E24377A / ETEC), this protein is Ureidoglycolate lyase.